The following is a 369-amino-acid chain: 2-aminoethylphosphonate--pyruvate transaminase (369 aa).

N6-(pyridoxal phosphate)lysine is present on K193.

The protein belongs to the class-V pyridoxal-phosphate-dependent aminotransferase family. PhnW subfamily. As to quaternary structure, homodimer. It depends on pyridoxal 5'-phosphate as a cofactor.

It catalyses the reaction (2-aminoethyl)phosphonate + pyruvate = phosphonoacetaldehyde + L-alanine. Its function is as follows. Involved in phosphonate degradation. This chain is 2-aminoethylphosphonate--pyruvate transaminase, found in Pseudomonas fluorescens (strain Pf0-1).